A 373-amino-acid polypeptide reads, in one-letter code: tRNA (guanine(26)-N(2))-dimethyltransferase (373 aa).

Positions 2–365 (KIISEGETKL…AELSDLVVLI (364 aa)) constitute a Trm1 methyltransferase domain. S-adenosyl-L-methionine is bound by residues Arg-35, Arg-66, Asp-86, Asp-113, and Ala-114.

This sequence belongs to the class I-like SAM-binding methyltransferase superfamily. Trm1 family.

The enzyme catalyses guanosine(26) in tRNA + 2 S-adenosyl-L-methionine = N(2)-dimethylguanosine(26) in tRNA + 2 S-adenosyl-L-homocysteine + 2 H(+). In terms of biological role, dimethylates a single guanine residue at position 26 of a number of tRNAs using S-adenosyl-L-methionine as donor of the methyl groups. This Methanococcus maripaludis (strain C6 / ATCC BAA-1332) protein is tRNA (guanine(26)-N(2))-dimethyltransferase.